The primary structure comprises 548 residues: Glucose-6-phosphate isomerase 1 (548 aa).

The active-site Proton donor is the Glu-353. Active-site residues include His-384 and Lys-495.

The protein belongs to the GPI family.

The protein resides in the cytoplasm. The catalysed reaction is alpha-D-glucose 6-phosphate = beta-D-fructose 6-phosphate. It participates in carbohydrate biosynthesis; gluconeogenesis. It functions in the pathway carbohydrate degradation; glycolysis; D-glyceraldehyde 3-phosphate and glycerone phosphate from D-glucose: step 2/4. In terms of biological role, catalyzes the reversible isomerization of glucose-6-phosphate to fructose-6-phosphate. The chain is Glucose-6-phosphate isomerase 1 from Chromohalobacter salexigens (strain ATCC BAA-138 / DSM 3043 / CIP 106854 / NCIMB 13768 / 1H11).